The primary structure comprises 201 residues: FMN-dependent NADH:quinone oxidoreductase (201 aa).

Residues Ser-9 and 93–96 (MYNF) contribute to the FMN site.

Belongs to the azoreductase type 1 family. As to quaternary structure, homodimer. FMN is required as a cofactor.

It catalyses the reaction 2 a quinone + NADH + H(+) = 2 a 1,4-benzosemiquinone + NAD(+). The enzyme catalyses N,N-dimethyl-1,4-phenylenediamine + anthranilate + 2 NAD(+) = 2-(4-dimethylaminophenyl)diazenylbenzoate + 2 NADH + 2 H(+). Functionally, quinone reductase that provides resistance to thiol-specific stress caused by electrophilic quinones. In terms of biological role, also exhibits azoreductase activity. Catalyzes the reductive cleavage of the azo bond in aromatic azo compounds to the corresponding amines. This Bradyrhizobium sp. (strain BTAi1 / ATCC BAA-1182) protein is FMN-dependent NADH:quinone oxidoreductase.